The following is a 141-amino-acid chain: Nucleoside diphosphate kinase (141 aa).

The ATP site is built by lysine 11, phenylalanine 59, arginine 87, threonine 93, arginine 104, and asparagine 114. Histidine 117 acts as the Pros-phosphohistidine intermediate in catalysis.

Belongs to the NDK family. In terms of assembly, homotetramer. Requires Mg(2+) as cofactor.

The protein localises to the cytoplasm. The enzyme catalyses a 2'-deoxyribonucleoside 5'-diphosphate + ATP = a 2'-deoxyribonucleoside 5'-triphosphate + ADP. It catalyses the reaction a ribonucleoside 5'-diphosphate + ATP = a ribonucleoside 5'-triphosphate + ADP. Major role in the synthesis of nucleoside triphosphates other than ATP. The ATP gamma phosphate is transferred to the NDP beta phosphate via a ping-pong mechanism, using a phosphorylated active-site intermediate. This is Nucleoside diphosphate kinase from Ralstonia pickettii (strain 12J).